An 803-amino-acid polypeptide reads, in one-letter code: Zinc finger X-linked protein ZXDB (803 aa).

3 disordered regions span residues 1–91 (MEIP…GGDD), 120–140 (EAEEGPGLQGGESGANPAGPT), and 218–260 (AAHP…GPRG). Residues 13-26 (LQGGGGGGIPAGGG) show a composition bias toward gly residues. 10 C2H2-type zinc fingers span residues 271-295 (YLCPEAQCGQTFAKKHQLKVHLLTH), 304-328 (FKCPLGGCGWTFTTSYKLKRHLQSH), 334-358 (FGCPAEGCGKSFTTVYNLKAHMKGH), 364-386 (FKCEVCEESFPTQAKLSAHQRSH), 393-417 (YQCAFSGCKKTFITVSALFSHNRAH), 424-448 (FSCSFPGCSKQYDKACRLKIHLRSH), 454-478 (FLCDFDGCGWNFTSMSKLLRHKRKH), 484-508 (FMCPVEGCGKSFTRAEHLKGHSITH), 514-538 (FVCPVAGCCARFSARSSLYIHSKKH), and 547-572 (SRCPISSCNKLFTSKHSMKTHMVKRH). Positions 271 to 577 (YLCPEAQCGQ…MVKRHKVGQD (307 aa)) are required for interaction with ZXDC. The required for transcriptional activation stretch occupies residues 576–703 (QDLLAQLEAA…NMDEVSSVSV (128 aa)).

It belongs to the ZXD family. In terms of assembly, self-associates. Interacts with ZXDC and CIITA. In terms of tissue distribution, may be expressed in brain, heart, kidney, liver, lung, muscle and placenta.

The protein localises to the nucleus. Its function is as follows. Cooperates with CIITA to promote transcription of MHC class I and MHC class II genes. This chain is Zinc finger X-linked protein ZXDB (ZXDB), found in Homo sapiens (Human).